The following is a 958-amino-acid chain: Structure-specific endonuclease subunit SLX4 (958 aa).

Disordered regions lie at residues 89–123, 183–209, 326–400, 531–589, 594–613, and 655–849; these read AESP…KGKT, QKKA…GPID, LATA…LSPT, DLTI…EQHQ, QSNT…SFEL, and STAA…SPPA. A compositionally biased stretch (basic residues) spans 109 to 121; the sequence is KKPRTAGARKKKG. Basic and acidic residues predominate over residues 332-341; the sequence is RRPEEAERST. Residues 342–351 show a composition bias toward polar residues; the sequence is LSRQQDTHIP. The segment covering 364–373 has biased composition (low complexity); it reads AASKSASAKP. Residues 374 to 389 are compositionally biased toward basic residues; that stretch reads KAAKKAPKPRATKKKQ. Pro residues predominate over residues 600 to 610; that stretch reads QPQPAPPPPPS. Composition is skewed to low complexity over residues 655–666, 775–787, and 821–838; these read STAAQAAMSTSA, TTSP…RAKA, and PDSG…SSPD.

It belongs to the SLX4 family. As to quaternary structure, forms a heterodimer with SLX1. Post-translationally, phosphorylated in response to DNA damage.

The protein localises to the nucleus. Regulatory subunit of the SLX1-SLX4 structure-specific endonuclease that resolves DNA secondary structures generated during DNA repair and recombination. Has endonuclease activity towards branched DNA substrates, introducing single-strand cuts in duplex DNA close to junctions with ss-DNA. In Chaetomium globosum (strain ATCC 6205 / CBS 148.51 / DSM 1962 / NBRC 6347 / NRRL 1970) (Soil fungus), this protein is Structure-specific endonuclease subunit SLX4.